The primary structure comprises 520 residues: Probable methylmalonate-semialdehyde/malonate-semialdehyde dehydrogenase [acylating], mitochondrial (520 aa).

6 residues coordinate NAD(+): alanine 169, phenylalanine 171, lysine 195, glutamate 198, arginine 199, and serine 248. Catalysis depends on cysteine 303, which acts as the Nucleophile. Glutamate 403 serves as a coordination point for NAD(+).

Belongs to the aldehyde dehydrogenase family. Homotetramer.

It is found in the mitochondrion. It carries out the reaction 2-methyl-3-oxopropanoate + NAD(+) + CoA + H2O = propanoyl-CoA + hydrogencarbonate + NADH + H(+). The catalysed reaction is 3-oxopropanoate + NAD(+) + CoA + H2O = hydrogencarbonate + acetyl-CoA + NADH + H(+). In terms of biological role, probable malonate and methylmalonate semialdehyde dehydrogenase involved in the catabolism of valine, thymine, and compounds catabolized by way of beta-alanine, including uracil and cytidine. This chain is Probable methylmalonate-semialdehyde/malonate-semialdehyde dehydrogenase [acylating], mitochondrial, found in Drosophila melanogaster (Fruit fly).